Here is a 464-residue protein sequence, read N- to C-terminus: UDP-N-acetylmuramoylalanine--D-glutamate ligase (464 aa).

Glycine 112 to threonine 118 is an ATP binding site.

The protein belongs to the MurCDEF family.

The protein resides in the cytoplasm. It catalyses the reaction UDP-N-acetyl-alpha-D-muramoyl-L-alanine + D-glutamate + ATP = UDP-N-acetyl-alpha-D-muramoyl-L-alanyl-D-glutamate + ADP + phosphate + H(+). It functions in the pathway cell wall biogenesis; peptidoglycan biosynthesis. Cell wall formation. Catalyzes the addition of glutamate to the nucleotide precursor UDP-N-acetylmuramoyl-L-alanine (UMA). This chain is UDP-N-acetylmuramoylalanine--D-glutamate ligase, found in Chlorobium phaeobacteroides (strain DSM 266 / SMG 266 / 2430).